We begin with the raw amino-acid sequence, 801 residues long: Phosphatidylinositol 4-kinase beta (801 aa).

Disordered stretches follow at residues methionine 1–leucine 29, glutamate 101–glutamine 121, and arginine 250–proline 304. Position 2 is an N-acetylglycine (glycine 2). The interval glycine 2–valine 68 is interaction with ACBD3. Residues leucine 29–serine 242 enclose the PIK helical domain. Serine 258 is modified (phosphoserine). Residues proline 259–serine 268 are compositionally biased toward polar residues. At threonine 263 the chain carries Phosphothreonine. Residues serine 266, serine 275, serine 277, serine 284, serine 294, and serine 413 each carry the phosphoserine modification. A compositionally biased stretch (low complexity) spans aspartate 278–serine 294. Threonine 423 carries the phosphothreonine modification. Serine 496 is subject to Phosphoserine. Phosphothreonine is present on residues threonine 502 and threonine 504. One can recognise a PI3K/PI4K catalytic domain in the interval glutamate 520–threonine 786. The segment at valine 526–glycine 532 is G-loop. The tract at residues glutamine 653–asparagine 661 is catalytic loop. Positions histidine 672 to threonine 696 are activation loop.

This sequence belongs to the PI3/PI4-kinase family. Type III PI4K subfamily. In terms of assembly, interacts with ARF1 and ARF3 in the Golgi complex, but not with ARF4, ARF5 or ARF6. Interacts with NCS1/FREQ in a calcium-independent manner. Interacts with CALN1/CABP8 and CALN2/CABP7; in a calcium-dependent manner; this interaction competes with NCS1/FREQ binding. Interacts with ACBD3. Interacts with ARMH3, YWHAB, YWHAE, YWHAG, YWHAH, YWHAQ, YWHAZ and SFN. Interacts with GGA2 (via VHS domain); the interaction is important for PI4KB location at the Golgi apparatus membrane. Interacts with ATG9A. Requires Mg(2+) as cofactor. The cofactor is Mn(2+).

Its subcellular location is the endomembrane system. It is found in the mitochondrion outer membrane. The protein resides in the rough endoplasmic reticulum membrane. The protein localises to the golgi apparatus. It localises to the golgi apparatus membrane. It catalyses the reaction a 1,2-diacyl-sn-glycero-3-phospho-(1D-myo-inositol) + ATP = a 1,2-diacyl-sn-glycero-3-phospho-(1D-myo-inositol 4-phosphate) + ADP + H(+). Inhibited by wortmannin. Increased kinase activity upon interaction with NCS1/FREQ. In terms of biological role, phosphorylates phosphatidylinositol (PI) in the first committed step in the production of the second messenger inositol-1,4,5,-trisphosphate (PIP). May regulate Golgi disintegration/reorganization during mitosis, possibly via its phosphorylation. Involved in Golgi-to-plasma membrane trafficking. May play an important role in the inner ear development. The protein is Phosphatidylinositol 4-kinase beta (PI4KB) of Sorex araneus (Eurasian common shrew).